Here is a 377-residue protein sequence, read N- to C-terminus: Protein RecA (377 aa).

An ATP-binding site is contributed by 65-72 (GPESSGKT). The segment at 329–377 (GDEEAAATKATETKTDAPKDKDKGKTKAKDKPADVTPGQIELAPDKSAK) is disordered. Basic and acidic residues predominate over residues 339–361 (TETKTDAPKDKDKGKTKAKDKPA).

This sequence belongs to the RecA family.

Its subcellular location is the cytoplasm. Its function is as follows. Can catalyze the hydrolysis of ATP in the presence of single-stranded DNA, the ATP-dependent uptake of single-stranded DNA by duplex DNA, and the ATP-dependent hybridization of homologous single-stranded DNAs. It interacts with LexA causing its activation and leading to its autocatalytic cleavage. This Levilactobacillus brevis (strain ATCC 367 / BCRC 12310 / CIP 105137 / JCM 1170 / LMG 11437 / NCIMB 947 / NCTC 947) (Lactobacillus brevis) protein is Protein RecA.